The chain runs to 309 residues: Sulfate adenylyltransferase subunit 2 (309 aa).

It belongs to the PAPS reductase family. CysD subfamily. In terms of assembly, heterodimer composed of CysD, the smaller subunit, and CysN.

It catalyses the reaction sulfate + ATP + H(+) = adenosine 5'-phosphosulfate + diphosphate. It functions in the pathway sulfur metabolism; hydrogen sulfide biosynthesis; sulfite from sulfate: step 1/3. In terms of biological role, with CysN forms the ATP sulfurylase (ATPS) that catalyzes the adenylation of sulfate producing adenosine 5'-phosphosulfate (APS) and diphosphate, the first enzymatic step in sulfur assimilation pathway. APS synthesis involves the formation of a high-energy phosphoric-sulfuric acid anhydride bond driven by GTP hydrolysis by CysN coupled to ATP hydrolysis by CysD. The sequence is that of Sulfate adenylyltransferase subunit 2 from Mycobacterium sp. (strain JLS).